Reading from the N-terminus, the 81-residue chain is X antigen family member 1 (81 aa).

Residue Lys-12 forms a Glycyl lysine isopeptide (Lys-Gly) (interchain with G-Cter in SUMO2) linkage. Residue Ser-20 is modified to Phosphoserine. Glycyl lysine isopeptide (Lys-Gly) (interchain with G-Cter in SUMO2) cross-links involve residues Lys-61 and Lys-65.

This sequence belongs to the GAGE family. In normal tissues, highly expressed in testis. Expressed also in many different types of cancers: highly expressed in breast cancer, prostate cancer and many types of lung cancers, including squamous cell carcinoma, small cell carcinoma, non-small cell carcinoma, and adenocarcinoma, as well as in Ewing's cell lines, in some Ewing's sarcoma patient samples, and in one of one alveolar rhabdomyosarcoma patient sample.

In Homo sapiens (Human), this protein is X antigen family member 1.